The following is a 232-amino-acid chain: MTNDNSGIWVLGYGSLIYKPPSHYTHRIPAIIHGFARRFWQSSTDHRGTPANPGRVATLIPYEDIIRQTAFLKNVNLYSESAPIQDPDDLVTIGVVYYIPPEHAQEVREYLNVREQNGYTLHEVEVHLETNREHEAELGEALEQLPRHNKSGKRVLLTSVYIGTIDNEAFVGPETVDETAKVIAVSHGPSGSNYEYLAKLEQALAQMPIMKERGRITDHYLTALLETVNKYR.

10–15 (VLGYGS) is a binding site for substrate. Catalysis depends on Glu115, which acts as the Proton acceptor.

Belongs to the gamma-glutamylcyclotransferase family. ChaC subfamily.

It is found in the cytoplasm. The protein resides in the nucleus. The catalysed reaction is glutathione = L-cysteinylglycine + 5-oxo-L-proline. In terms of biological role, catalyzes the cleavage of glutathione into 5-oxo-L-proline and a Cys-Gly dipeptide. Acts specifically on glutathione, but not on other gamma-glutamyl peptides. Allows utilization of gluthathione through subsequent cleavage of the Cys-Gly dipeptide by Cys-Gly metallodipeptidase DUG1. The chain is Glutathione-specific gamma-glutamylcyclotransferase from Saccharomyces cerevisiae (strain ATCC 204508 / S288c) (Baker's yeast).